We begin with the raw amino-acid sequence, 408 residues long: MQSSAVFSLSPSLPLLKPRRLSLRHHPITTAASSSDLNVSPNVVSIPSLSRRSWRLASSDSPLRAWSGVPSPISHSLDTNRFRTAATAVPESAEEGDNSGKLTKVLELGLLFAMWYLFNIYFNIYNKQVLKALHAPMTVTLVQFAVGSVLITIMWVLNLYKRPKISGAQLAAILPLAVVHTLGNLFTNMSLGKVSVSFTHTIKAMEPFFSVLLSAMFLGEKPTPWVLGAIVPIVGGVALASISEVSFNWAGFSSAMASNLTNQSRNVLSKKVMVKKDDSLDNITLFSIITLMSLVLMAPVTFFTEGIKFTPSYIQSAGVNVKQIYTKSLIAALCFHAYQQVSYMILARVSPVTHSVGNCVKRVVVIVSSVIFFKTPVSPVNAFGTGIALAGVFLYSRVKGIKPKPKTA.

The N-terminal 85 residues, 1–85, are a transit peptide targeting the chloroplast; it reads MQSSAVFSLS…SLDTNRFRTA (85 aa). At Ala86 the chain carries N-acetylalanine. 8 helical membrane-spanning segments follow: residues 105-125, 137-157, 165-185, 198-218, 222-242, 283-303, 324-346, and 377-396; these read VLEL…FNIY, MTVT…MWVL, ISGA…LGNL, FTHT…AMFL, PTPW…LASI, ITLF…VTFF, IYTK…YMIL, and VSPV…FLYS. The EamA domain occupies 124–241; the sequence is IYNKQVLKAL…PIVGGVALAS (118 aa).

Belongs to the TPT transporter family. PPT (TC 2.A.7.9) subfamily. Expressed in root columella, lateral root cap and root vasculature tissue. In leaves, highly expressed in xylem parenchyma cells. In flowers, expressed in sepals, petals, filaments of the stamens, anthers and stigma.

The protein localises to the plastid. It localises to the chloroplast membrane. Functionally, phosphoenolpyruvate/phosphate translocator that transports phosphoenolpyruvate (PEP), 2-phosphoglycerate, 3-phosphoglycerate and dihydroxyacetone phosphate. Imports PEP to the chloroplast stroma as one substrate of the shikimate pathway, from which aromatic amino acids and a variety of secondary products derive. Required for correct leaf mesophyll cell development and expression of chlorophyll a/b binding protein 3 (CAB3). The protein is Phosphoenolpyruvate/phosphate translocator 1, chloroplastic (PPT1) of Arabidopsis thaliana (Mouse-ear cress).